The chain runs to 460 residues: Cysteine--tRNA ligase (460 aa).

Cys28 contributes to the Zn(2+) binding site. A 'HIGH' region motif is present at residues 30-40 (VTIYDLCHIGH). 3 residues coordinate Zn(2+): Cys209, His234, and Glu238. Positions 266–270 (KMSKS) match the 'KMSKS' region motif. Lys269 contacts ATP.

It belongs to the class-I aminoacyl-tRNA synthetase family. In terms of assembly, monomer. Requires Zn(2+) as cofactor.

It localises to the cytoplasm. The catalysed reaction is tRNA(Cys) + L-cysteine + ATP = L-cysteinyl-tRNA(Cys) + AMP + diphosphate. The chain is Cysteine--tRNA ligase from Shewanella frigidimarina (strain NCIMB 400).